The sequence spans 472 residues: Inhibitor of Apoptosis OPG037 (472 aa).

ANK repeat units lie at residues 97–126, 130–161, 233–263, 267–297, 322–351, and 353–377; these read DGNY…DPNA, HNKT…KINN, DGNT…DVNK, FGDS…VITD, YDST…ICED, and MYYA…SVDS.

It belongs to the orthopoxvirus OPG037 protein family. May interact with host caspase-9-Apaf-1 complex.

It is found in the host cytoplasm. Inhibits host apoptosis. Acts by associating with host apoptosome. In Homo sapiens (Human), this protein is Inhibitor of Apoptosis OPG037 (OPG037).